The primary structure comprises 350 residues: MATVGAPRHFCRCACFCTDNLYVARYGLHVRFRGEQQLRRDYGPILRSRGCVSAKDFQQLLAELEQEVERRQRLGQESAARKALIASSYHPARPEVYDSLQDAALAPEFLAVTEYSVSPDADLKGLLQRLETVSEEKRIYRVPVFTAPFCQALLEELEHFEQSDMPKGRPNTMNNYGVLLHELGLDEPLMTPLRERFLQPLMALLYPDCGGGRLDSHRAFVVKYAPGQDLELGCHYDNAELTLNVALGKVFTGGALYFGGLFQAPTALTEPLEVEHVVGQGVLHRGGQLHGARPLGTGERWNLVVWLRASAVRNSLCPMCCREPDLVDDEGFGDGFTREEPATVDVCALT.

Residues 215 to 309 (DSHRAFVVKY…RWNLVVWLRA (95 aa)) enclose the Fe2OG dioxygenase domain. 3 residues coordinate Fe cation: His-235, Asp-237, and His-290. Arg-300 contributes to the 2-oxoglutarate binding site.

The protein belongs to the OGFOD2 family. It depends on Fe(2+) as a cofactor. L-ascorbate is required as a cofactor.

In Homo sapiens (Human), this protein is 2-oxoglutarate and iron-dependent oxygenase domain-containing protein 2 (OGFOD2).